The sequence spans 148 residues: uncharacterized protein (148 aa).

This is an uncharacterized protein from Acheta domesticus (House cricket).